A 326-amino-acid chain; its full sequence is Mitochondrial substrate carrier family protein R (326 aa).

3 Solcar repeats span residues 9–95 (TSPM…LKNN), 101–214 (KSSV…FKRI), and 226–318 (VIGI…LCDY). A run of 6 helical transmembrane segments spans residues 12–32 (MVTL…IAPL), 64–84 (LAGL…YSAI), 104–124 (VQIF…TYPL), 185–205 (GIWR…GVGY), 226–246 (VIGI…QTAA), and 290–310 (LFKG…VAFL).

This sequence belongs to the mitochondrial carrier (TC 2.A.29) family.

The protein resides in the mitochondrion inner membrane. Its function is as follows. Mitochondrial solute carriers shuttle metabolites, nucleotides, and cofactors through the mitochondrial inner membrane. May be involved in the accumulation of coenzyme A in the mitochondrial matrix. This Dictyostelium discoideum (Social amoeba) protein is Mitochondrial substrate carrier family protein R (mcfR).